A 247-amino-acid polypeptide reads, in one-letter code: MSVTMREMLEAGVHFGHQTRFWNPKMAPFIFGHRNKIHIINLEKTLPMYQDALKYVRQLAANRGTILFVGTKRQSREILAEEAARAGMPFVDSRWLGGMLTNFKTVKTSIKRLKDMEVAKEAGATETMSKKEALMFEREMDKLVKSIGGIKDMGGIPDAIFVVDVGYHKIAVTEAAKLGIPVIGVVDTNHSPEGIDYVIPGNDDSSKAVALYVRGVADAILEGRANAVQEVVEAARGGDDFVEVQEG.

Belongs to the universal ribosomal protein uS2 family.

The protein is Small ribosomal subunit protein uS2 of Ralstonia pickettii (strain 12J).